The chain runs to 333 residues: Ornithine carbamoyltransferase (333 aa).

Carbamoyl phosphate-binding positions include 56-59 (STRT), Arg107, and 134-137 (HPTQ). Residues Asn167, Asp231, and 235-236 (SM) each bind L-ornithine. Carbamoyl phosphate contacts are provided by residues 273-274 (CL) and Arg318.

It belongs to the aspartate/ornithine carbamoyltransferase superfamily. OTCase family.

It is found in the cytoplasm. The enzyme catalyses carbamoyl phosphate + L-ornithine = L-citrulline + phosphate + H(+). The protein operates within amino-acid degradation; L-arginine degradation via ADI pathway; carbamoyl phosphate from L-arginine: step 2/2. In terms of biological role, reversibly catalyzes the transfer of the carbamoyl group from carbamoyl phosphate (CP) to the N(epsilon) atom of ornithine (ORN) to produce L-citrulline. In Clostridium botulinum (strain Kyoto / Type A2), this protein is Ornithine carbamoyltransferase.